The chain runs to 152 residues: MTDAFDRLKKRSRTPIAREGSLTTGPELSDRPLQLLPREFETFCDRYAVHAGDVIEAALDLVLLDPDLQQRLLQRLRQGNGSDRVWLGTACPRSWQQQLQQQAQDQGLSEADLLQEAIAQRLDLVLGQTTLREEVTLLRQELDQLKRKLHGW.

Self-associates, interacts with McdA probably via the C-terminus of both proteins. Homohexamerizes. Probably a trimer of dimers. Interacts with most of the shell components of the carboxysome (CcmK2, CcmK3, CcmK4, CcmL and CcmO, but not CcmP) via its C-terminus.

The protein localises to the carboxysome. In terms of biological role, mcdA and McdB together mediate carboxysome (Cb) spacing, size, ultrastructure and probably inheritance in the cell. Together they prevent Cb aggregation. McdA is an ATPase that forms dynamic gradients on the nucleoid in response to adapter protein McdB, which associates with carboxysomes. The interplay between McdA gradients on the nucleoid and McdB-bound carboxysomes result in the equal spacing of Cbs along the cell length. McdB may have an additional function in cell divison. Stimulates the ATPase activity of McdA, causing McdA to be released from DNA. Overexpression leads to loss of McdA oscillation and formation of large Cb aggregates which colocalize with McdB, as well as diffuse McdB staining in the cytoplasm. Undergoes liquid-liquid phase separation between pH 6.5-7.5 and at concentrations between 1 uM and 167 uM. Forms polar foci upon overexpression in E.coli. Its function is as follows. Incorrect positioning (aggregation) of carboxysomes results in reduced CO(2) fixation by encapsulated RuBisCO, which leads to slower growth, cell elongation, asymmetric cell division and an increase in RuBisCO levels. In Synechococcus elongatus (strain ATCC 33912 / PCC 7942 / FACHB-805) (Anacystis nidulans R2), this protein is Maintenance of carboxysome distribution protein B.